A 652-amino-acid polypeptide reads, in one-letter code: DNA ligase (652 aa).

NAD(+) contacts are provided by residues 29 to 33, 78 to 79, and E107; these read DSEYD and SL. Residue K109 is the N6-AMP-lysine intermediate of the active site. R130, E164, K278, and K302 together coordinate NAD(+). Residues C395, C398, C413, and C418 each contribute to the Zn(2+) site. One can recognise a BRCT domain in the interval 577–652; that stretch reads VADAALSGLT…VRDEAWLESL (76 aa).

This sequence belongs to the NAD-dependent DNA ligase family. LigA subfamily. Requires Mg(2+) as cofactor. It depends on Mn(2+) as a cofactor.

It carries out the reaction NAD(+) + (deoxyribonucleotide)n-3'-hydroxyl + 5'-phospho-(deoxyribonucleotide)m = (deoxyribonucleotide)n+m + AMP + beta-nicotinamide D-nucleotide.. DNA ligase that catalyzes the formation of phosphodiester linkages between 5'-phosphoryl and 3'-hydroxyl groups in double-stranded DNA using NAD as a coenzyme and as the energy source for the reaction. It is essential for DNA replication and repair of damaged DNA. This Streptococcus pneumoniae serotype 4 (strain ATCC BAA-334 / TIGR4) protein is DNA ligase.